Consider the following 372-residue polypeptide: Segmentation polarity homeobox protein engrailed (372 aa).

Disordered regions lie at residues 1-35 (MAFE…YSPQ), 47-112 (YERG…LQPT), 196-246 (ERLS…QSNP), and 261-286 (DRPS…PRTA). Composition is skewed to basic and acidic residues over residues 79–105 (DYYR…DRSR) and 197–215 (RLSR…KRPD). The span at 216–244 (SASSIVSSTSSGAVSTCGSSDASSIQSQS) shows a compositional bias: low complexity. Positions 280-339 (EKRPRTAFSGAQLARLKHEFAENRYLTERRRQSLAAELGLAEAQIKIWFQNKRAKIKKAS) form a DNA-binding region, homeobox.

The protein belongs to the engrailed homeobox family. As to expression, expressed in the middle silk gland but not in the posterior silk gland during the fourth molt/fifth intermolt period.

It is found in the nucleus. This protein might be involved in the compartmentalization of the silk gland. This chain is Segmentation polarity homeobox protein engrailed (en), found in Bombyx mori (Silk moth).